The primary structure comprises 336 residues: Holliday junction branch migration complex subunit RuvB (336 aa).

The segment at 4-184 is large ATPase domain (RuvB-L); it reads ADRLISAGTT…FGIVQRLEFY (181 aa). ATP-binding positions include Ile23, Arg24, Gly65, Lys68, Thr69, Thr70, 131 to 133, Arg174, Tyr184, and Arg221; that span reads EDY. Thr69 contributes to the Mg(2+) binding site. Residues 185 to 255 are small ATPAse domain (RuvB-S); it reads QVPDLQYIVS…IAAQALDMLN (71 aa). The segment at 258-336 is head domain (RuvB-H); it reads AEGFDYMDRK…HFGITPPEMP (79 aa). Positions 294, 313, and 318 each coordinate DNA.

This sequence belongs to the RuvB family. Homohexamer. Forms an RuvA(8)-RuvB(12)-Holliday junction (HJ) complex. HJ DNA is sandwiched between 2 RuvA tetramers; dsDNA enters through RuvA and exits via RuvB. An RuvB hexamer assembles on each DNA strand where it exits the tetramer. Each RuvB hexamer is contacted by two RuvA subunits (via domain III) on 2 adjacent RuvB subunits; this complex drives branch migration. In the full resolvosome a probable DNA-RuvA(4)-RuvB(12)-RuvC(2) complex forms which resolves the HJ.

Its subcellular location is the cytoplasm. It carries out the reaction ATP + H2O = ADP + phosphate + H(+). Its function is as follows. The RuvA-RuvB-RuvC complex processes Holliday junction (HJ) DNA during genetic recombination and DNA repair, while the RuvA-RuvB complex plays an important role in the rescue of blocked DNA replication forks via replication fork reversal (RFR). RuvA specifically binds to HJ cruciform DNA, conferring on it an open structure. The RuvB hexamer acts as an ATP-dependent pump, pulling dsDNA into and through the RuvAB complex. RuvB forms 2 homohexamers on either side of HJ DNA bound by 1 or 2 RuvA tetramers; 4 subunits per hexamer contact DNA at a time. Coordinated motions by a converter formed by DNA-disengaged RuvB subunits stimulates ATP hydrolysis and nucleotide exchange. Immobilization of the converter enables RuvB to convert the ATP-contained energy into a lever motion, pulling 2 nucleotides of DNA out of the RuvA tetramer per ATP hydrolyzed, thus driving DNA branch migration. The RuvB motors rotate together with the DNA substrate, which together with the progressing nucleotide cycle form the mechanistic basis for DNA recombination by continuous HJ branch migration. Branch migration allows RuvC to scan DNA until it finds its consensus sequence, where it cleaves and resolves cruciform DNA. In Shigella sonnei (strain Ss046), this protein is Holliday junction branch migration complex subunit RuvB.